A 339-amino-acid polypeptide reads, in one-letter code: Protein FAM131B (339 aa).

The disordered stretch occupies residues 1-22 (MDSTSSLHGSSLHRPSTEQTRT). A phosphoserine mark is found at S47, S114, and S117. The segment at 222-339 (GPAFGDSQPS…PLLTQPSTPA (118 aa)) is disordered. Polar residues-rich tracts occupy residues 239-250 (QPASGYSAQEPS) and 324-339 (PTTSFLPLLTQPSTPA). T325 carries the phosphothreonine modification. S327 bears the Phosphoserine mark.

It belongs to the FAM131 family.

The protein is Protein FAM131B (FAM131B) of Bos taurus (Bovine).